The following is a 554-amino-acid chain: 3-(3-hydroxy-phenyl)propionate/3-hydroxycinnamic acid hydroxylase (554 aa).

FAD contacts are provided by residues 17-46 (QVAI…VVEK) and 285-295 (FRIDRVLLAGD).

This sequence belongs to the PheA/TfdB FAD monooxygenase family. It depends on FAD as a cofactor.

It carries out the reaction 3-(3-hydroxyphenyl)propanoate + NADH + O2 + H(+) = 3-(2,3-dihydroxyphenyl)propanoate + NAD(+) + H2O. It catalyses the reaction (2E)-3-(3-hydroxyphenyl)prop-2-enoate + NADH + O2 + H(+) = (2E)-3-(2,3-dihydroxyphenyl)prop-2-enoate + NAD(+) + H2O. Its pathway is aromatic compound metabolism; 3-phenylpropanoate degradation. Its function is as follows. Catalyzes the insertion of one atom of molecular oxygen into position 2 of the phenyl ring of 3-(3-hydroxyphenyl)propionate (3-HPP) and hydroxycinnamic acid (3HCI). In Shigella sonnei (strain Ss046), this protein is 3-(3-hydroxy-phenyl)propionate/3-hydroxycinnamic acid hydroxylase.